A 295-amino-acid polypeptide reads, in one-letter code: 33 kDa chaperonin (295 aa).

2 cysteine pairs are disulfide-bonded: cysteine 237–cysteine 239 and cysteine 270–cysteine 273.

The protein belongs to the HSP33 family. In terms of processing, under oxidizing conditions two disulfide bonds are formed involving the reactive cysteines. Under reducing conditions zinc is bound to the reactive cysteines and the protein is inactive.

The protein resides in the cytoplasm. Functionally, redox regulated molecular chaperone. Protects both thermally unfolding and oxidatively damaged proteins from irreversible aggregation. Plays an important role in the bacterial defense system toward oxidative stress. The protein is 33 kDa chaperonin of Lactiplantibacillus plantarum (strain ATCC BAA-793 / NCIMB 8826 / WCFS1) (Lactobacillus plantarum).